A 378-amino-acid chain; its full sequence is Glutamate 5-kinase (378 aa).

Position 19 (Lys19) interacts with ATP. Substrate contacts are provided by Ser60, Asp147, and Asn159. Residues 179–180 (SD) and 221–227 (SGGMRTK) contribute to the ATP site. In terms of domain architecture, PUA spans 285-362 (KGTLTIDAGA…GEMEQLLGYR (78 aa)).

The protein belongs to the glutamate 5-kinase family.

The protein resides in the cytoplasm. It catalyses the reaction L-glutamate + ATP = L-glutamyl 5-phosphate + ADP. It functions in the pathway amino-acid biosynthesis; L-proline biosynthesis; L-glutamate 5-semialdehyde from L-glutamate: step 1/2. Catalyzes the transfer of a phosphate group to glutamate to form L-glutamate 5-phosphate. The sequence is that of Glutamate 5-kinase from Gluconobacter oxydans (strain 621H) (Gluconobacter suboxydans).